A 338-amino-acid chain; its full sequence is Sulfotransferase 2B1 (338 aa).

67–72 is a binding site for 3'-phosphoadenylyl sulfate; that stretch reads KSGTNW. Substrate is bound by residues Trp-95 and Trp-100. His-122 acts as the Proton acceptor in catalysis. 3'-phosphoadenylyl sulfate-binding positions include Arg-144, Ser-152, Tyr-207, 241–246, and 271–273; these read SAFAAM and RKG. The segment at 301 to 338 is disordered; that stretch reads VQRFPWDTSEEDSSPDGQPDPEPSPSPASDDPNPGSSQ. Positions 327-338 are enriched in low complexity; that stretch reads PASDDPNPGSSQ.

The protein belongs to the sulfotransferase 1 family. Expressed at high levels in epididymis, intestine and uterus, and low levels in brain and hypothalamus. Isoform 2 is most prominent in the brain and spinal cord, with modest expression in the lung, skin and spleen. Isoform 1 is most prominently expressed in skin and small intestine, with modest expression in muscle and prostate.

Its subcellular location is the cytoplasm. The protein resides in the cytosol. It localises to the microsome. It is found in the nucleus. It carries out the reaction an alcohol + 3'-phosphoadenylyl sulfate = an alkyl sulfate + adenosine 3',5'-bisphosphate + H(+). It catalyses the reaction pregnenolone + 3'-phosphoadenylyl sulfate = pregnenolone sulfate + adenosine 3',5'-bisphosphate + H(+). The enzyme catalyses 3beta-hydroxyandrost-5-en-17-one + 3'-phosphoadenylyl sulfate = dehydroepiandrosterone 3-sulfate + adenosine 3',5'-bisphosphate + H(+). The catalysed reaction is cholesterol + 3'-phosphoadenylyl sulfate = cholesterol sulfate + adenosine 3',5'-bisphosphate + H(+). Sulfotransferase that utilizes 3'-phospho-5'-adenylyl sulfate (PAPS) as sulfonate donor to catalyze the sulfate conjugation. Preferentially sulfonates cholesterol. Catalyzes sulfation of the 3beta-hydroxyl groups of steroids, such as, pregnenolone and dehydroepiandrosterone (DHEA). Cholesterol sulfation is approximately 10-fold higher than for pregnenolone and 20-fold higher than for DHEA. Plays a role in epidermal cholesterol metabolism and in the regulation of epidermal proliferation and differentiation. In terms of biological role, strongly sulfonates pregnenolone, however is capable to sulfonate cholesterol with a high degree of efficiency. DHEA is a relatively poor substrate. The polypeptide is Sulfotransferase 2B1 (Sult2b1) (Mus musculus (Mouse)).